Consider the following 313-residue polypeptide: D-alanine--D-alanine ligase (313 aa).

Residues 111–306 (KQVWHSLGLP…FQQLVLAILA (196 aa)) enclose the ATP-grasp domain. ATP is bound at residue 137–192 (AAELGFPLIVKPAHEGSSIGMAKVESVEALIAAWQDAARYDSQVLVEQWIAGPEYT). Residues aspartate 260, glutamate 273, and asparagine 275 each coordinate Mg(2+).

The protein belongs to the D-alanine--D-alanine ligase family. The cofactor is Mg(2+). Mn(2+) is required as a cofactor.

The protein resides in the cytoplasm. The catalysed reaction is 2 D-alanine + ATP = D-alanyl-D-alanine + ADP + phosphate + H(+). Its pathway is cell wall biogenesis; peptidoglycan biosynthesis. Its function is as follows. Cell wall formation. The protein is D-alanine--D-alanine ligase of Ectopseudomonas mendocina (strain ymp) (Pseudomonas mendocina).